The following is a 357-amino-acid chain: Sorbitol dehydrogenase 1 (357 aa).

C43 contributes to the Zn(2+) binding site. Y49 contributes to the substrate binding site. H68 and E69 together coordinate Zn(2+). E154 contributes to the substrate binding site. Residues D202, K207, 275 to 277, and 299 to 301 contribute to the NAD(+) site; these read VGM and CFR. R301 and Y302 together coordinate substrate.

It belongs to the zinc-containing alcohol dehydrogenase family. In terms of assembly, homotetramer. Zn(2+) serves as cofactor.

It carries out the reaction keto-D-fructose + NADH + H(+) = D-sorbitol + NAD(+). The enzyme catalyses xylitol + NAD(+) = D-xylulose + NADH + H(+). Functionally, polyol dehydrogenase that catalyzes the reversible NAD(+)-dependent oxidation of various sugar alcohols. Is active with D-sorbitol (D-glucitol) and xylitol as substrates, leading to the C2-oxidized product D-fructose and D-xylulose, respectively. Is likely involved in the utilization of D-sorbitol as a sole carbon source for growth. Has no activity on mannitol and primary alcohols such as ethanol. The protein is Sorbitol dehydrogenase 1 (SOR1) of Saccharomyces cerevisiae (strain ATCC 204508 / S288c) (Baker's yeast).